Consider the following 296-residue polypeptide: 4-hydroxy-tetrahydrodipicolinate synthase (296 aa).

Threonine 49 serves as a coordination point for pyruvate. Tyrosine 137 serves as the catalytic Proton donor/acceptor. Lysine 166 serves as the catalytic Schiff-base intermediate with substrate. Valine 208 provides a ligand contact to pyruvate.

It belongs to the DapA family. Homotetramer; dimer of dimers.

The protein resides in the cytoplasm. The enzyme catalyses L-aspartate 4-semialdehyde + pyruvate = (2S,4S)-4-hydroxy-2,3,4,5-tetrahydrodipicolinate + H2O + H(+). The protein operates within amino-acid biosynthesis; L-lysine biosynthesis via DAP pathway; (S)-tetrahydrodipicolinate from L-aspartate: step 3/4. Catalyzes the condensation of (S)-aspartate-beta-semialdehyde [(S)-ASA] and pyruvate to 4-hydroxy-tetrahydrodipicolinate (HTPA). The chain is 4-hydroxy-tetrahydrodipicolinate synthase from Desulforamulus reducens (strain ATCC BAA-1160 / DSM 100696 / MI-1) (Desulfotomaculum reducens).